Here is a 284-residue protein sequence, read N- to C-terminus: Aliphatic sulfonates import ATP-binding protein SsuB (284 aa).

Residues 21 to 242 (LRIAHAVKRY…HRGAPAFARL (222 aa)) form the ABC transporter domain. 53 to 60 (GRSGCGKS) is a binding site for ATP.

The protein belongs to the ABC transporter superfamily. Aliphatic sulfonates importer (TC 3.A.1.17.2) family. As to quaternary structure, the complex is composed of two ATP-binding proteins (SsuB), two transmembrane proteins (SsuC) and a solute-binding protein (SsuA).

The protein localises to the cell inner membrane. It catalyses the reaction ATP + H2O + aliphatic sulfonate-[sulfonate-binding protein]Side 1 = ADP + phosphate + aliphatic sulfonateSide 2 + [sulfonate-binding protein]Side 1.. Its function is as follows. Part of the ABC transporter complex SsuABC involved in aliphatic sulfonates import. Responsible for energy coupling to the transport system. This Ralstonia nicotianae (strain ATCC BAA-1114 / GMI1000) (Ralstonia solanacearum) protein is Aliphatic sulfonates import ATP-binding protein SsuB.